Reading from the N-terminus, the 88-residue chain is RQC P-site tRNA stabilizing factor (88 aa).

The S4 RNA-binding domain occupies 1 to 67 (MRLDKFLKVS…VEITNVKETV (67 aa)).

Belongs to the RqcP family. As to quaternary structure, associates with stalled 50S ribosomal subunits. Binds to RqcH, 23S rRNA and the P-site tRNA. Does not require RqcH for association with 50S subunits.

Its function is as follows. Key component of the ribosome quality control system (RQC), a ribosome-associated complex that mediates the extraction of incompletely synthesized nascent chains from stalled ribosomes and their subsequent degradation. RqcH recruits Ala-charged tRNA, and with RqcP directs the elongation of stalled nascent chains on 50S ribosomal subunits, leading to non-templated C-terminal alanine extensions (Ala tail). The Ala tail promotes nascent chain degradation. RqcP is associated with the translocation-like movement of the peptidyl-tRNA from the A-site into the P-site. This is RQC P-site tRNA stabilizing factor from Halalkalibacterium halodurans (strain ATCC BAA-125 / DSM 18197 / FERM 7344 / JCM 9153 / C-125) (Bacillus halodurans).